A 56-amino-acid chain; its full sequence is Large ribosomal subunit protein bL32 (56 aa).

Residues 1–37 (MAVQQNKPTRSKRGMRRSHDALTAPLLSVDKTSGETH) form a disordered region.

Belongs to the bacterial ribosomal protein bL32 family.

This Photorhabdus laumondii subsp. laumondii (strain DSM 15139 / CIP 105565 / TT01) (Photorhabdus luminescens subsp. laumondii) protein is Large ribosomal subunit protein bL32.